Reading from the N-terminus, the 369-residue chain is 4-hydroxy-3-methylbut-2-en-1-yl diphosphate synthase (flavodoxin) (369 aa).

Cys270, Cys273, Cys305, and Glu312 together coordinate [4Fe-4S] cluster.

Belongs to the IspG family. [4Fe-4S] cluster serves as cofactor.

It carries out the reaction (2E)-4-hydroxy-3-methylbut-2-enyl diphosphate + oxidized [flavodoxin] + H2O + 2 H(+) = 2-C-methyl-D-erythritol 2,4-cyclic diphosphate + reduced [flavodoxin]. Its pathway is isoprenoid biosynthesis; isopentenyl diphosphate biosynthesis via DXP pathway; isopentenyl diphosphate from 1-deoxy-D-xylulose 5-phosphate: step 5/6. Its function is as follows. Converts 2C-methyl-D-erythritol 2,4-cyclodiphosphate (ME-2,4cPP) into 1-hydroxy-2-methyl-2-(E)-butenyl 4-diphosphate. This chain is 4-hydroxy-3-methylbut-2-en-1-yl diphosphate synthase (flavodoxin), found in Pseudomonas fluorescens (strain Pf0-1).